Reading from the N-terminus, the 476-residue chain is Ubiquitin-conjugating enzyme E2 variant 3 (476 aa).

The UEV domain occupies 2–145 (EFSAETLRQQ…EEELPLYSLS (144 aa)). Position 185–213 (185–213 (GDMALACLLAVSAKGTAGKLLLLDPTDGE)) interacts with NAD(+).

This sequence in the N-terminal section; belongs to the ubiquitin-conjugating enzyme family. UEV subfamily. It in the C-terminal section; belongs to the LDH/MDH superfamily. As to quaternary structure, homodimer.

Functionally, possible negative regulator of polyubiquitination. In Xenopus tropicalis (Western clawed frog), this protein is Ubiquitin-conjugating enzyme E2 variant 3 (uevld).